Reading from the N-terminus, the 402-residue chain is tRNA pseudouridine synthase Pus10 (402 aa).

The THUMP domain maps to 37-159 (RLRGERLVEK…QIRVHVQINP (123 aa)). The active-site Nucleophile is D228. Residues Y296 and Y364 each contribute to the substrate site.

The protein belongs to the pseudouridine synthase Pus10 family.

It catalyses the reaction uridine(54) in tRNA = pseudouridine(54) in tRNA. The enzyme catalyses uridine(55) in tRNA = pseudouridine(55) in tRNA. Functionally, responsible for synthesis of pseudouridine from uracil-54 and uracil-55 in the psi GC loop of transfer RNAs. This Methanothermobacter marburgensis (strain ATCC BAA-927 / DSM 2133 / JCM 14651 / NBRC 100331 / OCM 82 / Marburg) (Methanobacterium thermoautotrophicum) protein is tRNA pseudouridine synthase Pus10.